The sequence spans 247 residues: tRNA (guanine-N(1)-)-methyltransferase (247 aa).

S-adenosyl-L-methionine contacts are provided by residues Gly115 and 134-139 (IGDFVL).

Belongs to the RNA methyltransferase TrmD family. As to quaternary structure, homodimer.

Its subcellular location is the cytoplasm. It carries out the reaction guanosine(37) in tRNA + S-adenosyl-L-methionine = N(1)-methylguanosine(37) in tRNA + S-adenosyl-L-homocysteine + H(+). Its function is as follows. Specifically methylates guanosine-37 in various tRNAs. This chain is tRNA (guanine-N(1)-)-methyltransferase, found in Anaeromyxobacter dehalogenans (strain 2CP-C).